The following is a 204-amino-acid chain: NAD(P)H dehydrogenase (quinone) FQR1 (204 aa).

In terms of domain architecture, Flavodoxin-like spans 5 to 192; it reads VYIVYYSMYG…QQAFHQGQYI (188 aa). Residues 11–15, 112–165, and His136 contribute to the FMN site; these read SMYGH and IFYS…SPYG. Tyr13 contacts NAD(+).

The protein belongs to the WrbA family. Requires FMN as cofactor.

It is found in the cell membrane. It catalyses the reaction a quinone + NADH + H(+) = a quinol + NAD(+). The enzyme catalyses a quinone + NADPH + H(+) = a quinol + NADP(+). Functionally, catalyzes the transfer of electrons from NADH and NADPH to several quinones in vitro. May act as detoxification enzyme, and protect against auxin-induced oxidative stress. In Arabidopsis thaliana (Mouse-ear cress), this protein is NAD(P)H dehydrogenase (quinone) FQR1.